The sequence spans 373 residues: Galactoside alpha-(1,2)-fucosyltransferase 1 (373 aa).

Over 1-12 the chain is Cytoplasmic; sequence MWPPSRRQLCLA. Residues 13-29 form a helical; Signal-anchor for type II membrane protein membrane-spanning segment; sequence FLLVCALSAFSFLLHLH. Residues 30–373 lie on the Lumenal side of the membrane; that stretch reads QDLFRNGLAL…GSWRPWRFLG (344 aa). Residues Asn-66, Asn-301, and Asn-327 are each glycosylated (N-linked (GlcNAc...) asparagine).

This sequence belongs to the glycosyltransferase 11 family. Brain.

The protein resides in the golgi apparatus. It localises to the golgi stack membrane. It catalyses the reaction a beta-D-galactosyl-(1-&gt;4)-N-acetyl-beta-D-glucosaminyl derivative + GDP-beta-L-fucose = an alpha-L-Fuc-(1-&gt;2)-beta-D-Gal-(1-&gt;4)-beta-D-GlcNAc derivative + GDP + H(+). The enzyme catalyses a ganglioside GA1 + GDP-beta-L-fucose = a ganglioside Fuc-GA1 + GDP + H(+). It carries out the reaction a beta-D-Gal-(1-&gt;3)-beta-D-GlcNAc-(1-&gt;3)-beta-D-Gal-(1-&gt;4)-beta-D-Glc-(1&lt;-&gt;1')-Cer(d18:1(4E)) + GDP-beta-L-fucose = alpha-L-fucosyl-(1-&gt;2)- beta-D-galactosyl-(1-&gt;3)-N-acetyl-beta-D-glucosaminyl-(1-&gt;3)-beta-D-galactosyl-(1-&gt;4)-beta-D-glucosyl-(1&lt;-&gt;1')-N-acylsphing-4-enine + GDP + H(+). The catalysed reaction is a neolactoside nLc4Cer(d18:1(4E)) + GDP-beta-L-fucose = a neolactoside IV(2)-alpha-Fuc-nLc4Cer(d18:1(4E)) + GDP + H(+). It catalyses the reaction a ganglioside GM1 + GDP-beta-L-fucose = a ganglioside Fuc-GM1 + GDP + H(+). The enzyme catalyses beta-D-galactosyl-(1-&gt;3)-N-acetyl-D-galactosamine + GDP-beta-L-fucose = alpha-L-fucosyl-(1-&gt;2)-beta-D-galactosyl-(1-&gt;3)-N-acetyl-D-galactosamine + GDP + H(+). It functions in the pathway protein modification; protein glycosylation. Functionally, catalyzes the transfer of L-fucose, from a guanosine diphosphate-beta-L-fucose, to the terminal galactose residue of glycoconjugates through an alpha(1,2) linkage leading to H antigen synthesis that is an intermediate substrate in the synthesis of ABO blood group antigens. H antigen is essential for maturation of the glomerular layer of the main olfactory bulb, in cell migration and early cell-cell contacts during tumor associated angiogenesis. Preferentially fucosylates soluble lactose and to a lesser extent fucosylates glycolipids gangliosides GA1 and GM1a. The protein is Galactoside alpha-(1,2)-fucosyltransferase 1 of Oryctolagus cuniculus (Rabbit).